The sequence spans 263 residues: Probable ribosomal RNA small subunit methyltransferase A (263 aa).

5 residues coordinate S-adenosyl-L-methionine: Leu12, Gly37, Glu58, Asp83, and Asn100.

Belongs to the class I-like SAM-binding methyltransferase superfamily. rRNA adenine N(6)-methyltransferase family. RsmA subfamily.

The protein localises to the cytoplasm. Specifically dimethylates two adjacent adenosines in the loop of a conserved hairpin near the 3'-end of 16S rRNA in the 30S particle. May play a critical role in biogenesis of 30S subunits. The protein is Probable ribosomal RNA small subunit methyltransferase A of Methanococcus maripaludis (strain C5 / ATCC BAA-1333).